Consider the following 506-residue polypeptide: Sporulation kinase D (506 aa).

The next 2 helical transmembrane spans lie at 17–37 (VKLY…FVYE) and 250–270 (LVLP…LVLY). The Histidine kinase domain maps to 298-505 (STAHEIRNPL…EVTITLPVSA (208 aa)). A Phosphohistidine; by autocatalysis modification is found at H301.

As to quaternary structure, oligomerizes, probably forms homodimers; oligomerization is assisted by FloT. Interacts with FloT.

Its subcellular location is the cell membrane. The catalysed reaction is ATP + protein L-histidine = ADP + protein N-phospho-L-histidine.. Functionally, phosphorylates the sporulation-regulatory protein spo0F and, to a minor extent, is responsible for heterogeneous expression of spo0A during logarithmical growth. Also phosphorylates spo0A under biofilm growth conditions. The protein is Sporulation kinase D (kinD) of Bacillus subtilis (strain 168).